Reading from the N-terminus, the 319-residue chain is Tetrahydromethanopterin S-methyltransferase subunit H (319 aa).

The protein belongs to the MtrH family. As to quaternary structure, the complex is composed of 8 subunits; MtrA, MtrB, MtrC, MtrD, MtrE, MtrF, MtrG and MtrH.

It carries out the reaction 5-methyl-5,6,7,8-tetrahydromethanopterin + coenzyme M + 2 Na(+)(in) = 5,6,7,8-tetrahydromethanopterin + methyl-coenzyme M + 2 Na(+)(out). It functions in the pathway one-carbon metabolism; methanogenesis from CO(2); methyl-coenzyme M from 5,10-methylene-5,6,7,8-tetrahydromethanopterin: step 2/2. In terms of biological role, part of a complex that catalyzes the formation of methyl-coenzyme M and tetrahydromethanopterin from coenzyme M and methyl-tetrahydromethanopterin. This is an energy-conserving, sodium-ion translocating step. MtrH catalyzes the transfer of the methyl group from methyl-tetrahydromethanopterin to the corrinoid prosthetic group of MtrA. In Methanococcus maripaludis (strain C5 / ATCC BAA-1333), this protein is Tetrahydromethanopterin S-methyltransferase subunit H.